Reading from the N-terminus, the 1411-residue chain is Zinc finger protein 609 (1411 aa).

Disordered stretches follow at residues Met1–Glu26, Gln47–Pro190, Pro353–Val484, Ala517–Ile659, Ala679–Gln963, Tyr1005–Glu1125, Lys1153–His1221, and Gly1270–His1367. A phosphoserine mark is found at Ser358, Ser361, and Ser379. The span at Pro377–Thr401 shows a compositional bias: polar residues. Phosphothreonine is present on Thr381. Phosphoserine occurs at positions 413, 433, 446, 452, 467, and 470. Over residues Ala423–Ala437 the composition is skewed to polar residues. A Glycyl lysine isopeptide (Lys-Gly) (interchain with G-Cter in SUMO2) cross-link involves residue Lys479. Residues Ile495–His520 form a C2H2-type zinc finger. Basic and acidic residues predominate over residues Ala519–Ala529. Residue Ser533 is modified to Phosphoserine. Residues Asn549 to Arg563 show a composition bias toward polar residues. 2 positions are modified to phosphoserine: Ser576 and Ser578. Residues Ser626 to Pro649 show a composition bias toward basic and acidic residues. Positions Ala679 to Gln700 are enriched in polar residues. Basic residues predominate over residues Asp726–Glu736. Residue Ser743 is modified to Phosphoserine. Thr746 carries the post-translational modification Phosphothreonine. Basic and acidic residues predominate over residues Cys751–Ser764. Phosphoserine is present on Ser758. Residue Lys789 forms a Glycyl lysine isopeptide (Lys-Gly) (interchain with G-Cter in SUMO2) linkage. Over residues Phe798–Ala844 the composition is skewed to polar residues. Ser804 carries the phosphoserine modification. Thr823 carries the post-translational modification Phosphothreonine. Phosphoserine occurs at positions 842, 846, and 849. Residues Gly855–Lys876 are compositionally biased toward basic and acidic residues. The segment covering Ser897 to Pro908 has biased composition (low complexity). Positions Thr926–Glu950 are enriched in basic and acidic residues. Over residues Ser952–Gln963 the composition is skewed to low complexity. Basic and acidic residues predominate over residues Gly1020–Gln1042. A Phosphoserine modification is found at Ser1055. Residue Lys1061 forms a Glycyl lysine isopeptide (Lys-Gly) (interchain with G-Cter in SUMO2) linkage. Composition is skewed to basic and acidic residues over residues Leu1097–Glu1113, Lys1153–Thr1187, and Thr1195–Pro1208. A Glycyl lysine isopeptide (Lys-Gly) (interchain with G-Cter in SUMO2) cross-link involves residue Lys1153. Residues Pro1286–Ser1296 are compositionally biased toward polar residues. Lys1297 participates in a covalent cross-link: Glycyl lysine isopeptide (Lys-Gly) (interchain with G-Cter in SUMO2). Residues Gly1328–Ser1337 show a composition bias toward gly residues.

Interacts (via N-terminus) with NIPBL. Interacts with INTS13; promoting association with the integrator complex. In terms of tissue distribution, isoform 1: Expressed in myoblasts and myotubes. Isoform 2: Expressed in myoblasts and myotubes, with a preference in undifferentiated myoblasts.

The protein resides in the nucleus. Transcription factor, which activates RAG1, and possibly RAG2, transcription. Through the regulation of RAG1/2 expression, may regulate thymocyte maturation. Along with NIPBL and the multiprotein complex Integrator, promotes cortical neuron migration during brain development by regulating the transcription of crucial genes in this process. Preferentially binds promoters containing paused RNA polymerase II. Up-regulates the expression of SEMA3A, NRP1, PLXND1 and GABBR2 genes, among others. Functionally, involved in the regulation of myoblast proliferation during myogenesis. The polypeptide is Zinc finger protein 609 (Homo sapiens (Human)).